The chain runs to 319 residues: tRNA-cytidine(32) 2-sulfurtransferase (319 aa).

A PP-loop motif motif is present at residues 45–50 (SGGKDS). Cys120, Cys123, and Cys211 together coordinate [4Fe-4S] cluster.

Belongs to the TtcA family. Homodimer. The cofactor is Mg(2+). It depends on [4Fe-4S] cluster as a cofactor.

The protein localises to the cytoplasm. It carries out the reaction cytidine(32) in tRNA + S-sulfanyl-L-cysteinyl-[cysteine desulfurase] + AH2 + ATP = 2-thiocytidine(32) in tRNA + L-cysteinyl-[cysteine desulfurase] + A + AMP + diphosphate + H(+). Its pathway is tRNA modification. Catalyzes the ATP-dependent 2-thiolation of cytidine in position 32 of tRNA, to form 2-thiocytidine (s(2)C32). The sulfur atoms are provided by the cysteine/cysteine desulfurase (IscS) system. This is tRNA-cytidine(32) 2-sulfurtransferase from Shewanella woodyi (strain ATCC 51908 / MS32).